The following is a 153-amino-acid chain: Superoxide dismutase [Cu-Zn] (153 aa).

Cu cation-binding residues include His-46, His-48, and His-63. Cys-57 and Cys-146 are disulfide-bonded. Residues 61–80 (GPHFNPFGKEHGAPEDENRH) form a disordered region. Residues His-63, His-71, His-80, and Asp-83 each coordinate Zn(2+). Over residues 68–80 (GKEHGAPEDENRH) the composition is skewed to basic and acidic residues. A Cu cation-binding site is contributed by His-120. Residues 124-136 (DDLGRSEHPESKK) are compositionally biased toward basic and acidic residues. Residues 124 to 143 (DDLGRSEHPESKKTGNAGAR) form a disordered region. A substrate-binding site is contributed by Arg-143.

Belongs to the Cu-Zn superoxide dismutase family. In terms of assembly, homodimer. The cofactor is Cu cation. It depends on Zn(2+) as a cofactor.

Its subcellular location is the cytoplasm. It catalyses the reaction 2 superoxide + 2 H(+) = H2O2 + O2. Destroys radicals which are normally produced within the cells and which are toxic to biological systems. The protein is Superoxide dismutase [Cu-Zn] (sodC) of Aspergillus flavus.